Here is a 458-residue protein sequence, read N- to C-terminus: UDP-N-acetylmuramate--L-alanine ligase (458 aa).

112–118 (GTHGKTT) contacts ATP.

This sequence belongs to the MurCDEF family.

The protein localises to the cytoplasm. The catalysed reaction is UDP-N-acetyl-alpha-D-muramate + L-alanine + ATP = UDP-N-acetyl-alpha-D-muramoyl-L-alanine + ADP + phosphate + H(+). It functions in the pathway cell wall biogenesis; peptidoglycan biosynthesis. Its function is as follows. Cell wall formation. The chain is UDP-N-acetylmuramate--L-alanine ligase from Geotalea uraniireducens (strain Rf4) (Geobacter uraniireducens).